We begin with the raw amino-acid sequence, 318 residues long: Nucleotide-binding protein Lcho_3490 (318 aa).

35 to 42 (GISGGGKS) is an ATP binding site. 84 to 87 (DVRN) contacts GTP.

This sequence belongs to the RapZ-like family.

In terms of biological role, displays ATPase and GTPase activities. The protein is Nucleotide-binding protein Lcho_3490 of Leptothrix cholodnii (strain ATCC 51168 / LMG 8142 / SP-6) (Leptothrix discophora (strain SP-6)).